Reading from the N-terminus, the 98-residue chain is MVAVRRPWPVTVAMLLILLACLGALVDAYPAKPEAPGEDASPEELSRYYASLRHYLNLVTRQRYGKRDVPAALFSKLLFTDDSDSENLPFRPEGLDQW.

Positions 1–28 are cleaved as a signal peptide; that stretch reads MVAVRRPWPVTVAMLLILLACLGALVDA. Ser41 is subject to Phosphoserine. At Tyr64 the chain carries Tyrosine amide. The propeptide occupies 68 to 98; sequence DVPAALFSKLLFTDDSDSENLPFRPEGLDQW.

The protein belongs to the NPY family. The peptide YY form is cleaved at Pro-30 by the prolyl endopeptidase FAP (seprase) activity (in vitro) to generate peptide YY(3-36).

The protein resides in the secreted. Its function is as follows. This gut peptide inhibits exocrine pancreatic secretion, has a vasoconstrictory action and inhibitis jejunal and colonic mobility. In Mus musculus (Mouse), this protein is Peptide YY (Pyy).